Consider the following 393-residue polypeptide: Small ribosomal subunit protein bS1 (393 aa).

S1 motif domains are found at residues 16–90 (GDKV…LSKR), 108–173 (NQTI…LSRK), 194–262 (GDVI…LSIK), and 279–348 (GDVI…LSIK). Residues 356-369 (VIESDSETTQSYLD) are compositionally biased toward polar residues. Residues 356 to 381 (VIESDSETTQSYLDNGSDDEDNPTLG) are disordered.

The protein belongs to the bacterial ribosomal protein bS1 family.

Binds mRNA; thus facilitating recognition of the initiation point. It is needed to translate mRNA with a short Shine-Dalgarno (SD) purine-rich sequence. The protein is Small ribosomal subunit protein bS1 (rpsA) of Staphylococcus saprophyticus subsp. saprophyticus (strain ATCC 15305 / DSM 20229 / NCIMB 8711 / NCTC 7292 / S-41).